A 332-amino-acid chain; its full sequence is L-lactate dehydrogenase A chain (332 aa).

NAD(+)-binding positions include 29–57 (GMVG…MEDK) and Arg-99. Substrate contacts are provided by Arg-106, Asn-138, and Arg-169. Asn-138 is a binding site for NAD(+). His-193 (proton acceptor) is an active-site residue. Substrate is bound at residue Thr-248.

It belongs to the LDH/MDH superfamily. LDH family. As to quaternary structure, homotetramer.

Its subcellular location is the cytoplasm. The catalysed reaction is (S)-lactate + NAD(+) = pyruvate + NADH + H(+). Its pathway is fermentation; pyruvate fermentation to lactate; (S)-lactate from pyruvate: step 1/1. Functionally, interconverts simultaneously and stereospecifically pyruvate and lactate with concomitant interconversion of NADH and NAD(+). The chain is L-lactate dehydrogenase A chain (ldha) from Eleginops maclovinus (Patagonian blennie).